Consider the following 88-residue polypeptide: Small ribosomal subunit protein bS20 (88 aa).

It belongs to the bacterial ribosomal protein bS20 family.

Functionally, binds directly to 16S ribosomal RNA. The protein is Small ribosomal subunit protein bS20 of Desulforudis audaxviator (strain MP104C).